The following is a 102-amino-acid chain: Large ribosomal subunit protein bL28 (102 aa).

Positions 1–20 (MSNSCDLTGHGWQNGNMVSH) are enriched in polar residues. The tract at residues 1-27 (MSNSCDLTGHGWQNGNMVSHSNRKTKK) is disordered.

Belongs to the bacterial ribosomal protein bL28 family.

This is Large ribosomal subunit protein bL28 from Neorickettsia sennetsu (strain ATCC VR-367 / Miyayama) (Ehrlichia sennetsu).